We begin with the raw amino-acid sequence, 287 residues long: Phosphatidylserine decarboxylase proenzyme (287 aa).

Residues D90, H147, and S252 each act as charge relay system; for autoendoproteolytic cleavage activity in the active site. The active-site Schiff-base intermediate with substrate; via pyruvic acid; for decarboxylase activity is S252. Residue S252 is modified to Pyruvic acid (Ser); by autocatalysis.

Belongs to the phosphatidylserine decarboxylase family. PSD-B subfamily. Prokaryotic type I sub-subfamily. Heterodimer of a large membrane-associated beta subunit and a small pyruvoyl-containing alpha subunit. Pyruvate serves as cofactor. Is synthesized initially as an inactive proenzyme. Formation of the active enzyme involves a self-maturation process in which the active site pyruvoyl group is generated from an internal serine residue via an autocatalytic post-translational modification. Two non-identical subunits are generated from the proenzyme in this reaction, and the pyruvate is formed at the N-terminus of the alpha chain, which is derived from the carboxyl end of the proenzyme. The autoendoproteolytic cleavage occurs by a canonical serine protease mechanism, in which the side chain hydroxyl group of the serine supplies its oxygen atom to form the C-terminus of the beta chain, while the remainder of the serine residue undergoes an oxidative deamination to produce ammonia and the pyruvoyl prosthetic group on the alpha chain. During this reaction, the Ser that is part of the protease active site of the proenzyme becomes the pyruvoyl prosthetic group, which constitutes an essential element of the active site of the mature decarboxylase.

The protein resides in the cell membrane. It carries out the reaction a 1,2-diacyl-sn-glycero-3-phospho-L-serine + H(+) = a 1,2-diacyl-sn-glycero-3-phosphoethanolamine + CO2. It functions in the pathway phospholipid metabolism; phosphatidylethanolamine biosynthesis; phosphatidylethanolamine from CDP-diacylglycerol: step 2/2. Catalyzes the formation of phosphatidylethanolamine (PtdEtn) from phosphatidylserine (PtdSer). The polypeptide is Phosphatidylserine decarboxylase proenzyme (Pseudomonas putida (strain GB-1)).